Reading from the N-terminus, the 300-residue chain is NAD kinase (300 aa).

Residue D75 is the Proton acceptor of the active site. NAD(+)-binding positions include 75–76, 149–150, R177, D179, 190–195, A214, and Q248; these read DG, ND, and TAYALS.

The protein belongs to the NAD kinase family. A divalent metal cation is required as a cofactor.

It is found in the cytoplasm. The enzyme catalyses NAD(+) + ATP = ADP + NADP(+) + H(+). In terms of biological role, involved in the regulation of the intracellular balance of NAD and NADP, and is a key enzyme in the biosynthesis of NADP. Catalyzes specifically the phosphorylation on 2'-hydroxyl of the adenosine moiety of NAD to yield NADP. The chain is NAD kinase from Burkholderia cenocepacia (strain HI2424).